The following is a 590-amino-acid chain: Leukocyte immunoglobulin-like receptor subfamily B member 5 (590 aa).

The signal sequence occupies residues 1-23; the sequence is MTLTLSVLICLGLSVGPRTCVQA. Topologically, residues 24–458 are extracellular; it reads GTLPKPTLWA…PQSGLGRHLG (435 aa). 4 Ig-like C2-type domains span residues 27-116, 111-228, 224-313, and 337-418; these read PKPT…LELV, DPLE…SLLI, PSLL…DPLD, and GENV…LVVS. The cysteines at positions 49 and 98 are disulfide-linked. Residue N139 is glycosylated (N-linked (GlcNAc...) asparagine). Cystine bridges form between C144/C195 and C244/C295. N-linked (GlcNAc...) asparagine glycosylation is found at N279 and N339. Residues C344 and C395 are joined by a disulfide bond. Positions 416–433 are enriched in low complexity; it reads VVSGPSGDPSLSPTGSTP. Residues 416-449 form a disordered region; it reads VVSGPSGDPSLSPTGSTPTPGPEDQPLTPTGLDP. Residues 459–479 form a helical membrane-spanning segment; sequence VVTGVSVAFVLLLFLLLFLLL. Over 480–590 the chain is Cytoplasmic; it reads RHRHQSKHRT…PSIYAPLAIH (111 aa). 2 disordered regions span residues 488-514 and 529-550; these read RTSAHFYRPAGAAGPEPKDQGLQKRAS and KDTQPKDGVEMDAPAAASEAPQ. At S514 the chain carries Phosphoserine. Positions 552–557 match the ITIM motif 1 motif; the sequence is VTYAQL. Basic and acidic residues predominate over residues 562–578; sequence LRREATEPPPSQEREPP. The tract at residues 562–590 is disordered; sequence LRREATEPPPSQEREPPAEPSIYAPLAIH. The ITIM motif 2 motif lies at 582–587; the sequence is SIYAPL.

As to expression, detected in a natural killer (NK) cells.

The protein localises to the membrane. Functionally, may act as receptor for class I MHC antigens. The protein is Leukocyte immunoglobulin-like receptor subfamily B member 5 (LILRB5) of Homo sapiens (Human).